Here is a 360-residue protein sequence, read N- to C-terminus: Aminomethyltransferase (360 aa).

The protein belongs to the GcvT family. The glycine cleavage system is composed of four proteins: P, T, L and H.

The catalysed reaction is N(6)-[(R)-S(8)-aminomethyldihydrolipoyl]-L-lysyl-[protein] + (6S)-5,6,7,8-tetrahydrofolate = N(6)-[(R)-dihydrolipoyl]-L-lysyl-[protein] + (6R)-5,10-methylene-5,6,7,8-tetrahydrofolate + NH4(+). In terms of biological role, the glycine cleavage system catalyzes the degradation of glycine. This Methylococcus capsulatus (strain ATCC 33009 / NCIMB 11132 / Bath) protein is Aminomethyltransferase.